The chain runs to 78 residues: Rubredoxin (78 aa).

Residues 23 to 74 form the Rubredoxin-like domain; it reads DARLECKICWWEYDPEVGDPVWQIAPGTSFSALPAHWRCPNCDGEAEQFMVL. Residues Cys28, Cys31, Cys61, and Cys64 each contribute to the Fe cation site.

It belongs to the rubredoxin family. It depends on Fe(3+) as a cofactor.

Rubredoxin is a small nonheme, iron protein lacking acid-labile sulfide. Its single Fe, chelated to 4 Cys, functions as an electron acceptor and may also stabilize the conformation of the molecule. Could be involved in hydrogenase-linked redox processes. The polypeptide is Rubredoxin (hoxR) (Cupriavidus necator (strain ATCC 17699 / DSM 428 / KCTC 22496 / NCIMB 10442 / H16 / Stanier 337) (Ralstonia eutropha)).